Reading from the N-terminus, the 156-residue chain is Ribosomal RNA large subunit methyltransferase H (156 aa).

Residues L73, G104, and 123–128 (LSALTL) contribute to the S-adenosyl-L-methionine site.

The protein belongs to the RNA methyltransferase RlmH family. As to quaternary structure, homodimer.

It is found in the cytoplasm. It carries out the reaction pseudouridine(1915) in 23S rRNA + S-adenosyl-L-methionine = N(3)-methylpseudouridine(1915) in 23S rRNA + S-adenosyl-L-homocysteine + H(+). In terms of biological role, specifically methylates the pseudouridine at position 1915 (m3Psi1915) in 23S rRNA. The chain is Ribosomal RNA large subunit methyltransferase H from Shewanella denitrificans (strain OS217 / ATCC BAA-1090 / DSM 15013).